Here is a 534-residue protein sequence, read N- to C-terminus: N-acetylglutamate synthase, mitochondrial (534 aa).

Residues 1-18 constitute a mitochondrion transit peptide; the sequence is MATALMAVVLRAAAVAPR. Residues 19-99 are disordered; that stretch reads LRGRGGTGGA…HESPEPPSGR (81 aa). The interval 19–376 is amino-acid kinase domain (AAK); it reads LRGRGGTGGA…SGTLFKNAER (358 aa). Residues 81 to 96 are compositionally biased toward pro residues; sequence VPSPRPPVPHESPEPP. An N-acetyltransferase domain is found at 375 to 526; it reads ERMLRVRSLD…HAKGLPDSFH (152 aa). Substrate-binding positions include Lys-401, Lys-444, and 474–479; that span reads RSRVTN.

This sequence belongs to the acetyltransferase family. Homodimer. Homotetramer. Post-translationally, probably processed by mitochondrial processing peptidase (MPP). The long form has not yet been isolated. Highly expressed in the adult liver, kidney and small intestine. Weakly expressed in the fetal liver, lung, pancreas, placenta, heart and brain tissue.

The protein resides in the mitochondrion matrix. The enzyme catalyses L-glutamate + acetyl-CoA = N-acetyl-L-glutamate + CoA + H(+). It participates in amino-acid biosynthesis; L-arginine biosynthesis; N(2)-acetyl-L-ornithine from L-glutamate: step 1/4. With respect to regulation, increased by L-arginine. Functionally, plays a role in the regulation of ureagenesis by producing the essential cofactor N-acetylglutamate (NAG), thus modulating carbamoylphosphate synthase I (CPS1) activity. This Homo sapiens (Human) protein is N-acetylglutamate synthase, mitochondrial (NAGS).